Here is a 419-residue protein sequence, read N- to C-terminus: eIF5-mimic protein 1 (419 aa).

The tract at residues 1–22 (MNKHQKPVLTGQRFKTRKRDEK) is disordered. The residue at position 117 (Lys117) is an N6-acetyllysine. Residues 248 to 415 (VQQSLGTRKE…QNAEEESESE (168 aa)) enclose the W2 domain. 3 positions are modified to phosphoserine: Ser412, Ser414, and Ser419.

It belongs to the BZW family. As to quaternary structure, interacts with EIF3E, EIF2S2 and EIF3C. Expressed at high levels in heart, and at lower levels in skeletal muscle, spleen and lung. Expressed at low levels in brain regions where nascent and immature neurons are present.

The protein resides in the cytoplasm. Functionally, translation initiation regulator which represses non-AUG initiated translation and repeat-associated non-AUG (RAN) initiated translation by acting as a competitive inhibitor of eukaryotic translation initiation factor 5 (EIF5) function. Increases the accuracy of translation initiation by impeding EIF5-dependent translation from non-AUG codons by competing with it for interaction with EIF2S2 within the 43S pre-initiation complex (PIC) in an EIF3C-binding dependent manner. This chain is eIF5-mimic protein 1 (Bzw2), found in Rattus norvegicus (Rat).